A 555-amino-acid polypeptide reads, in one-letter code: Zinc transporter ZIP5 (555 aa).

At 1–242 (MGGQTVWMTL…HSQASKTSEG (242 aa)) the chain is on the extracellular side. The interval 108–148 (KHPSQSISHSHSHEDHHPSQGTTNSPPLRESLDAKSALSGS) is disordered. The chain crosses the membrane as a helical span at residues 243–263 (FLIALGWASLALLVISLPSLV). Topologically, residues 264-314 (ALGMAPLLQPSVLQVFLCPMAGMAVGTLCGDALLHLMPHAIFSQHTDHQNA) are cytoplasmic. A helical transmembrane segment spans residues 315–335 (VFKGLSVLGGLYLLFIFESLL). Over 336–408 (GLKQHFKNLK…DGIHNLTDGL (73 aa)) the chain is Extracellular. Polar residues predominate over residues 363 to 374 (TSSANQNESSGH). Residues 363-383 (TSSANQNESSGHGHSHGQAEP) form a disordered region. Residues 409–429 (AIGVAFSQSLTGGFSTAIAVF) traverse the membrane as a helical segment. At 430–452 (CHELPHELGDLAVLLSAGWPVRR) the chain is on the cytoplasmic side. The chain crosses the membrane as a helical span at residues 453 to 473 (LLVFSGLSALLGFVGVLAGSA). The Extracellular segment spans residues 474-482 (LGNHWASHS). Residues 483–503 (PWILTLTAGVFLYVALADMMP) traverse the membrane as a helical segment. Residues 504-518 (EMLHGACGSVSPLKR) lie on the Cytoplasmic side of the membrane. Residues 519 to 539 (FLLQALGLLTGGAIMLCIALF) traverse the membrane as a helical segment. Over 540–555 (EDHIAVSLGENSLGEN) the chain is Extracellular.

Belongs to the ZIP transporter (TC 2.A.5) family.

It localises to the basolateral cell membrane. The catalysed reaction is Zn(2+)(in) = Zn(2+)(out). Functionally, uniporter that transports zinc(2+) into polarized cells of enterocytes, pancreatic acinar and endoderm cells across the basolateral membrane and participates, notably, in zinc excretion from the intestine by the uptake of zinc from the blood into the intestine. The transport mechanism is temperature- and concentration-dependent and saturable. Mediates zinc homeostasis that is essential for venous angiogenesis. The sequence is that of Zinc transporter ZIP5 (slc39a5) from Danio rerio (Zebrafish).